The sequence spans 452 residues: AP-4 complex subunit mu-1 (452 aa).

In terms of domain architecture, MHD spans 184–451 (KNEVFLDVVE…LSHSDAYVIR (268 aa)).

This sequence belongs to the adaptor complexes medium subunit family. As to quaternary structure, adaptor protein complex 4 (AP-4) is a heterotetramer composed of two large adaptins (epsilon-type subunit AP4E1 and beta-type subunit AP4B1), a medium adaptin (mu-type subunit AP4M1) and a small adaptin (sigma-type AP4S1). Interacts with tyrosine-based sorting signals on the cytoplasmic tail of cargo proteins such as APP, ATG9A, LAMP2 and NAGPA. Interacts with the C-terminal domain of GRID2. Interacts with GRIA1 and GRIA2; the interaction is indirect via CACNG3. Interacts with CACNG3; CACNG3 associates GRIA1 and GRIA2 with the adaptor protein complex 4 (AP-4) to target them to the somatodendritic compartment of neurons. Interacts with HOOK1 and HOOK2; the interactions are direct, mediate the interaction between FTS-Hook-FHIP (FHF) complex and AP-4 and the perinuclear distribution of AP-4.

It is found in the golgi apparatus. Its subcellular location is the trans-Golgi network membrane. The protein resides in the early endosome. In terms of biological role, component of the adaptor protein complex 4 (AP-4). Adaptor protein complexes are vesicle coat components involved both in vesicle formation and cargo selection. They control the vesicular transport of proteins in different trafficking pathways. AP-4 forms a non clathrin-associated coat on vesicles departing the trans-Golgi network (TGN) and may be involved in the targeting of proteins from the trans-Golgi network (TGN) to the endosomal-lysosomal system. It is also involved in protein sorting to the basolateral membrane in epithelial cells and the proper asymmetric localization of somatodendritic proteins in neurons. Within AP-4, the mu-type subunit AP4M1 is directly involved in the recognition and binding of tyrosine-based sorting signals found in the cytoplasmic part of cargos. The adaptor protein complex 4 (AP-4) may also recognize other types of sorting signal. In Bos taurus (Bovine), this protein is AP-4 complex subunit mu-1.